The following is a 438-amino-acid chain: Glutamate-1-semialdehyde 2,1-aminomutase (438 aa).

At K274 the chain carries N6-(pyridoxal phosphate)lysine.

This sequence belongs to the class-III pyridoxal-phosphate-dependent aminotransferase family. HemL subfamily. As to quaternary structure, homodimer. Pyridoxal 5'-phosphate serves as cofactor.

The protein resides in the cytoplasm. The catalysed reaction is (S)-4-amino-5-oxopentanoate = 5-aminolevulinate. It participates in porphyrin-containing compound metabolism; protoporphyrin-IX biosynthesis; 5-aminolevulinate from L-glutamyl-tRNA(Glu): step 2/2. The chain is Glutamate-1-semialdehyde 2,1-aminomutase from Salinibacter ruber (strain DSM 13855 / M31).